A 71-amino-acid chain; its full sequence is Small ribosomal subunit protein bS21 (71 aa).

The protein belongs to the bacterial ribosomal protein bS21 family.

This is Small ribosomal subunit protein bS21 from Acidithiobacillus ferrooxidans (strain ATCC 23270 / DSM 14882 / CIP 104768 / NCIMB 8455) (Ferrobacillus ferrooxidans (strain ATCC 23270)).